Here is a 440-residue protein sequence, read N- to C-terminus: COP9 signalosome complex subunit 5 (440 aa).

The MPN domain maps to 71–218; the sequence is VLISKLSCEK…MGAFRTIESK (148 aa). Residues His-164, His-166, and Asp-177 each coordinate Zn(2+). Residues 164–177 carry the JAMM motif motif; that stretch reads HSHPGYDCWLSNID. Over residues 319 to 341 the composition is skewed to polar residues; it reads TQRGDSTETSSFGSMFSGDNTSD. Disordered regions lie at residues 319-343 and 376-400; these read TQRG…SDVD and SRST…HDEG.

This sequence belongs to the peptidase M67A family. CSN5 subfamily. In terms of assembly, component of a COP9 signalosome-like (CSN) complex, composed of at least RRI1/CSN5, CSN9, RRI2/CSN10, PCI8/CSN11, CSN12 and CSI1. Within this complex it probably interacts directly with CSN12. Also interacts with RPN5. It depends on a divalent metal cation as a cofactor.

Its subcellular location is the cytoplasm. It localises to the nucleus. Catalytic component of the COP9 signalosome (CSN) complex that acts as an regulator of the ubiquitin (Ubl) conjugation pathway by mediating the deneddylation of the cullin subunit of SCF-type E3 ubiquitin-protein ligase complexes. The CSN complex is involved in the regulation of the mating pheromone response. The chain is COP9 signalosome complex subunit 5 (RRI1) from Saccharomyces cerevisiae (strain YJM789) (Baker's yeast).